Consider the following 657-residue polypeptide: Pyoverdine export ATP-binding/permease protein PvdT (657 aa).

Residues 6 to 245 (IDLRGIRKSY…RSVNPAALQA (240 aa)) form the ABC transporter domain. ATP is bound at residue 43 to 50 (GASGSGKS). The next 4 membrane-spanning stretches (helical) occupy residues 285–305 (ALTL…LAVG), 539–559 (IAAI…LMTV), 590–610 (LSVV…AALL), and 620–640 (LPAV…FGFM).

This sequence belongs to the ABC transporter superfamily. Macrolide exporter (TC 3.A.1.122) family. Part of the tripartite efflux system PvdRT-OpmQ, which is composed of an inner membrane component with both ATPase and permease domains, PvdT, a periplasmic membrane fusion protein, PvdR, and an outer membrane component, OpmQ.

Its subcellular location is the cell inner membrane. Functionally, part of the tripartite efflux system PvdRT-OpmQ required for the secretion into the extracellular milieu of the siderophore pyoverdine (PVD), which is involved in iron acquisition. This subunit binds PVD and drives its secretion by hydrolyzing ATP. The system is responsible for export of newly synthesized PVD after the final steps of biosynthesis have taken place in the periplasm. It is also responsible for recycling of PVD after internalization of ferri-PVD into the periplasm by the outer-membrane receptor FpvA and release of iron from PVD, thus making PVD available for new cycles of iron uptake. The protein is Pyoverdine export ATP-binding/permease protein PvdT of Pseudomonas syringae pv. syringae (strain B728a).